A 281-amino-acid chain; its full sequence is Nuclear receptor-interacting protein 2 (281 aa).

Residues 18-85 (ESCSTGQRQA…RAHLSQQRRL (68 aa)) form a disordered region. A compositionally biased stretch (pro residues) spans 36-47 (TPPPSSPWPTPP). Residues 55 to 78 (QEARRDEGEARTRGQEAQLRDRAH) are compositionally biased toward basic and acidic residues. An LXXLL motif motif is present at residues 244–248 (LQTLL).

As to quaternary structure, interacts with NR1F2, RARA and THRB in a ligand-dependent manner.

It is found in the nucleus. Down-regulates transcriptional activation by nuclear receptors such as NR1F2. This is Nuclear receptor-interacting protein 2 (NRIP2) from Homo sapiens (Human).